The following is a 1127-amino-acid chain: Zinc finger protein basonuclin-2 (1127 aa).

Positions 44–67 are disordered; that stretch reads SEEAEVDVRERDTQRDREPKRARD. Over residues 49–67 the composition is skewed to basic and acidic residues; that stretch reads VDVRERDTQRDREPKRARD. K305 is covalently cross-linked (Glycyl lysine isopeptide (Lys-Gly) (interchain with G-Cter in SUMO2)). Residues 386–450 form a disordered region; it reads STQNEYNESS…DLSKTEHPKS (65 aa). The span at 389–400 shows a compositional bias: low complexity; that stretch reads NEYNESSESEVS. The segment covering 403–422 has biased composition (polar residues); the sequence is PYKSDQTPNRNALTSITNVE. Residues K424, K444, and K449 each participate in a glycyl lysine isopeptide (Lys-Gly) (interchain with G-Cter in SUMO2) cross-link. Residues 469–492 form a C2H2-type 1 zinc finger; it reads VFCNACGKTFYDKGTLKIHYNAVH. S589 carries the phosphoserine modification. A Glycyl lysine isopeptide (Lys-Gly) (interchain with G-Cter in SUMO2) cross-link involves residue K669. The interval 675–772 is disordered; it reads IDTADEFDDE…EESMEGDEHL (98 aa). The segment covering 676–689 has biased composition (acidic residues); the sequence is DTADEFDDEDDDPN. Composition is skewed to basic and acidic residues over residues 698 to 708 and 747 to 772; these read MSHDNHCHSQD and ERDY…DEHL. The C2H2-type 2 zinc-finger motif lies at 861–884; sequence KICYVCKKSFKSSYSVKLHYRNVH. Glycyl lysine isopeptide (Lys-Gly) (interchain with G-Cter in SUMO2) cross-links involve residues K922 and K947. Disordered stretches follow at residues 955 to 976 and 996 to 1041; these read LGLD…HLNG and LQSS…TLPG. Residues 1010-1023 show a composition bias toward acidic residues; it reads AGSDEGILLDDIDG. 2 C2H2-type zinc fingers span residues 1063-1086 and 1091-1118; these read IMCN…KTVH and HKCK…PNLH. Positions 1107–1127 are disordered; it reads SRNRHSQNPNLHKNIPFTSID.

Highly expressed in ovary, testis and kidney. Expressed at moderate levels in skin and small intestine, and at lower levels in lung. Trace amounts of expression detected in liver and colon. Not detected in brain, spleen or thymus.

Its subcellular location is the nucleus. In terms of biological role, probable transcription factor specific for skin keratinocytes. May play a role in the differentiation of spermatozoa and oocytes. May also play an important role in early urinary-tract development. The protein is Zinc finger protein basonuclin-2 of Mus musculus (Mouse).